Here is a 192-residue protein sequence, read N- to C-terminus: Cytidylate kinase (192 aa).

G12–T20 provides a ligand contact to ATP.

It belongs to the cytidylate kinase family. Type 2 subfamily.

The protein localises to the cytoplasm. It carries out the reaction CMP + ATP = CDP + ADP. It catalyses the reaction dCMP + ATP = dCDP + ADP. The sequence is that of Cytidylate kinase from Pyrococcus furiosus (strain ATCC 43587 / DSM 3638 / JCM 8422 / Vc1).